Reading from the N-terminus, the 6548-residue chain is Epiplakin (6548 aa).

At Thr-33 the chain carries Phosphothreonine. Plectin repeat units follow at residues 41 to 78, 79 to 116, 117 to 154, 155 to 192, 285 to 322, 323 to 360, 362 to 398, 399 to 436, and 437 to 470; these read AALPTTARSIAGVYVEASGQTQSIYAAIKQGLLPTGLG, LTLLEAQAATGGLVDLAQGQLLPVSEALRRGLVGLELK, EKLLAAERAVTGYPDPYGGEKLSLFQAIKKEVVDRTLG, WRLLEAQLATGGLVDPTQGVQVAPELACQQGLLDKETW, RRYLEGTGGLAGVVLLPGGHKKSFFQATVEHLVSKGIA, LQLLEAQAATRTLVHPTTGQRLWVEEAVKAGLVGPELH, QLLVAEQAVTGYYDPFSSSRIPVFQAMKKGLVDQPLA, LRLLDAQLATGGLICPARRFRLPLEAALRFGCLDEETR, and QRLSQAMGFSDPTTHDRLGYEQLLALSVTDPETG. The interval 49-1123 is interaction with KRT5; that stretch reads SIAGVYVEAS…KASGLHLLPL (1075 aa). Positions 545–565 form a coiled coil; it reads SVEELAAELKNIVEQAAATAK. Plectin repeat units lie at residues 611 to 648, 649 to 686, 687 to 724, 725 to 762, and 766 to 800; these read QRYLQGTGSIAGLLLPDSQERLSIYEARSKGLLRPGTA, LILLEAQAATGFIIDPKENKRYSVEEALRAGVIGPDVY, AKLLSAEHAVTGYTDPYSGEQISLFQAMQRDLIVRDHG, IRLLEAQIATGGVIDPVHSHRVPVDVAYQRGYFDQILN, and LDPSDDTKGFFDPNTHENLTYLQLLERCVHDSETG. A coiled-coil region spans residues 851–886; sequence TEDRRRQLLQRYRQRKITLEQVTQLLEKEMRRWTDI. Plectin repeat units lie at residues 931–968, 969–1006, 1007–1044, 1224–1284, 1285–1322, 1323–1360, 1361–1398, and 1402–1436; these read HRYLRGSGTVGGVLLKPSNQRISLYQAMKQKLLPPSTA, LALLEAQAATGTITDPCSMETLSVDEAVCRGVVGAEVY, GKLKRAEHSITGYRDPFSGKKVSLFRAMKKGLVPVEQA, QETL…TGLG, QQLLEAQVASGFLVNPLTNQRLSVEGAVKAGLVGMEQS, EHLRQVEKAVTGYSDPFSGGSLSLWQAMEKGLVTQSEA, FPLLQVQLATGGVVDPVHGVHLPQEVAYKLGLLDEQTS, and TATGKENKLFFDPNSREKVTYQQLRELCVLDADTG. Position 1551 is a phosphothreonine (Thr-1551). Plectin repeat units follow at residues 1572–1609, 1610–1647, 1648–1685, 1686–1723, and 1727–1761; these read RRSLEGGNFIAGVLIQDTKEKMSIPEALRRHILRPGTA, LVLLEAQAATGFIIDPVENRKLTVEQAFQAGMFGKETY, MKLLSAERAVTGYTDPYTGEQISLFQAMQRDLIVRDHG, IRLLEAQIATGGIIDPVHSHRVPVDVAYQRGYFNEEMN, and SDPSDDTKGFFDPNTHENLTYLQLLERCVEDPETG. The segment at 1580–6545 is interaction with KRT5; the sequence is FIAGVLIQDT…PETGLLFLSL (4966 aa). The stretch at 1819-1851 forms a coiled coil; that stretch reads RKLLREYRAQNIGLENLLEVITSTVEETEKQSQ. Plectin repeat units follow at residues 1898–1935, 1936–1973, 1974–2011, 2012–2049, 2225–2267, 2268–2305, 2306–2343, 2344–2381, and 2385–2419; these read RVYLEGSNYIAGVIAPLTQKVMSFYEASREELIPAGFA, AQMLEAQAATGYLMDPCTNQRLCVDEAIAAGLVGEDLR, ERLVNAEMAAKGYKDPATGETIPLYQAMERKLVGREEA, LRLLEVQVATGGVIDPRHHHRVPLDTACQRGCMCDDSL, KRYL…PGTA, LVLLEAQAATGFIIDPVNNRRLSVEEAVAAGVVGGEIQ, EKLLSAERAVTGYTDPYTGDQISLFQAMQRDLIVRDHG, IRLLEAQIATGGVIDPVHSHRVPVDVAYQRGYFDEDMN, and ADPGDDTKGFFDPNTHENLTYLQLLRRCVRDPETG. A phosphoserine mark is found at Ser-2430 and Ser-2508. A disordered region spans residues 2578–2626; it reads AEETQESKPKPRDASLKQQDTGARGSGTSPDEGDAQDSSESARQQQEQT. A compositionally biased stretch (basic and acidic residues) spans 2582–2592; that stretch reads QESKPKPRDAS. Composition is skewed to polar residues over residues 2593–2606 and 2615–2626; these read LKQQDTGARGSGTS and SSESARQQQEQT. Plectin repeat units follow at residues 2740 to 2782, 2783 to 2820, 2821 to 2858, 2859 to 2896, and 2900 to 2934; these read KRYL…PGTA, LVLLEAQAATGFIIDPVNNRRLSVEEAVAAGVVGGEIQ, EKLLSAERAVTGYTDPYTGDQISLFQAMQRDLIVRDHG, IRLLEAQIATGGVIDPVHSHRVPVDVAYQRGYFDEDMN, and ADPGDDTKGFFDPNTHENLTYLQLLRRCVRDPETG. An interaction with KRT14 region spans residues 2748–2940; the sequence is CIAGVLVPVQ…PETGFYMLQL (193 aa). Residues 3093–3144 are disordered; that stretch reads AEETQESKPKPRDASLKQQDTGARGSGTSPDEGDAQDSSESARQQQEQTLRA. Positions 3097 to 3107 are enriched in basic and acidic residues; the sequence is QESKPKPRDAS. Composition is skewed to polar residues over residues 3108–3121 and 3130–3144; these read LKQQDTGARGSGTS and SSESARQQQEQTLRA. Ser-3220 carries the post-translational modification Phosphoserine. Plectin repeat units lie at residues 3255 to 3297, 3298 to 3335, 3336 to 3373, 3374 to 3411, and 3415 to 3449; these read KRYL…PGTA, LVLLEAQAATGFIIDPVNNRRLSVEEAVAAGVVGGEIQ, EKLLSAERAVTGYTDPYTGDQISLFQAMQRDLIVRDHG, IRLLEAQIATGGVIDPVHSHRVPVDVAYQRGYFDEDMN, and ADPGDDTKGFFDPNTHENLTYLQLLRRCVRDPETG. Phosphoserine is present on residues Ser-3460 and Ser-3538. Positions 3608 to 3659 are disordered; the sequence is AEETQESKPKPRDASLKQQDTGARGSGTSPDEGDAQDSSESARQQQEQTLRA. The span at 3612–3622 shows a compositional bias: basic and acidic residues; that stretch reads QESKPKPRDAS. Polar residues-rich tracts occupy residues 3623 to 3636 and 3645 to 3659; these read LKQQDTGARGSGTS and SSESARQQQEQTLRA. Position 3735 is a phosphoserine (Ser-3735). Plectin repeat units lie at residues 3770 to 3812, 3813 to 3850, 3851 to 3888, 3889 to 3926, and 3930 to 3964; these read KRYL…PGTA, LVLLEAQAATGFIIDPVNNRRLSVEEAVAAGVVGGEIQ, EKLLSAERAVTGYTDPYTGDQISLFQAMQRDLIVRDHG, IRLLEAQIATGGVIDPVHSHRVPVDVAYQRGYFDEDMN, and ADPGDDTKGFFDPNTHENLTYLQLLRRCVRDPETG. 2 positions are modified to phosphoserine: Ser-3975 and Ser-4053. The segment at 4123 to 4174 is disordered; that stretch reads AEETQESKPKPRDASLKQQDTGARGSGTSPDEGDAQDSSESARQQQEQTLRA. Positions 4127-4137 are enriched in basic and acidic residues; that stretch reads QESKPKPRDAS. Polar residues-rich tracts occupy residues 4138 to 4151 and 4160 to 4174; these read LKQQDTGARGSGTS and SSESARQQQEQTLRA. 5 Plectin repeats span residues 4285 to 4327, 4328 to 4365, 4366 to 4403, 4404 to 4441, and 4445 to 4479; these read KRYL…PGTA, LVLLEAQAATGFIIDPVNNRRLSVEEAVAAGVVGGEIQ, EKLLSAERAVTGYTDPYTGDQISLFQAMQRDLIVRDHG, IRLLEAQIATGGVIDPVHSHRVPVDVAYQRGYFDEDMN, and ADPGDDTKGFFDPNTHENLTYLQLLRRCVRDPETG. A disordered region spans residues 4638 to 4689; the sequence is AEETQESKPKPRDASLKQQDTGARGSGTSPDEGDAQDSSESARQQQEQTLRA. A compositionally biased stretch (basic and acidic residues) spans 4642–4652; it reads QESKPKPRDAS. 2 stretches are compositionally biased toward polar residues: residues 4653-4666 and 4675-4689; these read LKQQDTGARGSGTS and SSESARQQQEQTLRA. A Phosphoserine modification is found at Ser-4765. 5 Plectin repeats span residues 4800 to 4842, 4843 to 4880, 4881 to 4918, 4919 to 4956, and 4960 to 4994; these read KRYL…PGTA, LVLLEAQAATGFIIDPVNNRRLSVEEAVAAGVVGGEIQ, EKLLSAERAVTGYTDPYTGDQISLFQAMQRDLIVRDHG, IRLLEAQIATGGVIDPVHSHRVPVDVAYQRGYFDEDMN, and ADPGDDTKGFFDPNTHENLTYLQLLRRCVRDPETG. Phosphoserine occurs at positions 5005 and 5083. Residues 5153–5204 are disordered; that stretch reads AEETQESKPKPRDASLKQQDTGARGSGTSPDEGDAQDSSESARQQQEQTLRA. Basic and acidic residues predominate over residues 5157–5167; the sequence is QESKPKPRDAS. Composition is skewed to polar residues over residues 5168–5181 and 5190–5204; these read LKQQDTGARGSGTS and SSESARQQQEQTLRA. 5 Plectin repeats span residues 5315–5357, 5358–5395, 5396–5433, 5434–5471, and 5475–5509; these read KRYL…PGTA, LVLLEAQAATGFIIDPVNNRRLSVEEAVAAGVVGGEIQ, EKLLSAERAVTGYTDPYTGDQISLFQAMQRDLIVRDHG, IRLLEAQIATGGVIDPVHSHRVPVDVAYQRGYFDEDMN, and ADPGDDTKGFFDPNTHENLTYLQLLRRCVRDPETG. Residues 5668 to 5719 are disordered; it reads AEETQESKPKPRDASLKQQDTGARGSGTSPDEGDAQDSSESARQQQEQTLRA. The segment covering 5672 to 5682 has biased composition (basic and acidic residues); that stretch reads QESKPKPRDAS. 2 stretches are compositionally biased toward polar residues: residues 5683–5696 and 5705–5719; these read LKQQDTGARGSGTS and SSESARQQQEQTLRA. Ser-5795 bears the Phosphoserine mark. Plectin repeat units follow at residues 5830-5872, 5873-5910, 5911-5948, 5949-5986, and 5990-6024; these read KRYL…PGTA, LVLLEAQAATGFIIDPVNNRRLSVEEAVAAGVVGGEIQ, EKLLSAERAVTGYTDPYTGDQISLFQAMQRDLIVRDHG, IRLLEAQIATGGVIDPVHSHRVPVDVAYQRGYFDEDMN, and ADPGDDTKGFFDPNTHENLTYLQLLRRCVRDPETG. Phosphoserine is present on residues Ser-6035 and Ser-6113. The interval 6183-6234 is disordered; sequence AEETQESKPKPRDASLKQQDTGARGSGTSPDEGDAQDSSESARQQQEQTLRA. The span at 6187-6197 shows a compositional bias: basic and acidic residues; it reads QESKPKPRDAS. Polar residues-rich tracts occupy residues 6198 to 6211 and 6220 to 6234; these read LKQQDTGARGSGTS and SSESARQQQEQTLRA. The residue at position 6310 (Ser-6310) is a Phosphoserine. 5 Plectin repeats span residues 6345–6387, 6388–6425, 6426–6463, 6464–6501, and 6505–6539; these read KRYL…PGTA, LVLLEAQAATGFIIDPVNNRRLSVEEAVAAGVVGGEIQ, EKLLSAERAVTGYTDPYTGDQISLFQAMQRDLIVKNHG, IRLLEAQIATGGVIDPVHSHRVPVDVAYQRGYFDQEMN, and ADPGDDTKGFFDPNTHENLTYLQLLQRATIDPETG.

It belongs to the plakin or cytolinker family. In terms of assembly, interacts with KRT5, KRT14 and KRT5/KRT14 heterotetramer; interacts preferentially with assembled filaments rather than keratin monomers. Interacts with KRT8 and KRT18 and KRT8/KRT18 heterotetramer; interacts preferentially with assembled filaments rather than keratin monomers. Interacts with KRT1, VIM and DES; interaction is stronger with KRT1 than with VIM or DES; interaction is dependent of higher-order structure of intermediate filament. High levels in skin, small intestine and salivary gland. Lower levels in lung, uterus and liver. Not detected in brain, kidney, muscle, heart or spleen. In skin, expressed in all epidermal layers but not in the dermis. In intestine, expressed exclusively in the epithelial cell layer of the villi. In liver, expressed at hepatocyte margins. Around the region of the wound, expressed in the upper half of the epidermis. Weakly expressed on the basilar side of the suprabasal layer of the epidermis at the wound's edge. Expressed strongly in the upper layer of the epidermis, especially in larger keratinocytes. Expressed in undifferentiated primary keratinocytes. Strongly expressed in ductal cells, and also expressed in acinar cells. Expressed in hepatocytes and cholangiocytes.

The protein localises to the cytoplasm. The protein resides in the cytoskeleton. Its subcellular location is the apicolateral cell membrane. It is found in the basolateral cell membrane. It localises to the cell junction. The protein localises to the hemidesmosome. The protein resides in the tight junction. Its subcellular location is the cell projection. In terms of biological role, cytoskeletal linker protein that connects to intermediate filaments and controls their reorganization in response to stress. In response to mechanical stress like wound healing, is associated with the machinery for cellular motility by slowing down keratinocyte migration and proliferation and accelerating keratin bundling in proliferating keratinocytes thus contributing to tissue architecture. However in wound healing in corneal epithelium also positively regulates cell differentiation and proliferation and negatively regulates migration thereby controlling corneal epithelium morphogenesis and integrity. In response to cellular stress, plays a role in keratin filament reorganization, probably by protecting keratin filaments against disruption. During liver and pancreas injuries, plays a protective role by chaperoning disease-induced intermediate filament reorganization. In Mus musculus (Mouse), this protein is Epiplakin.